Consider the following 202-residue polypeptide: UPF0102 protein Dde_1093 (202 aa).

Belongs to the UPF0102 family.

This is UPF0102 protein Dde_1093 from Oleidesulfovibrio alaskensis (strain ATCC BAA-1058 / DSM 17464 / G20) (Desulfovibrio alaskensis).